The primary structure comprises 227 residues: Germin-like protein subfamily 1 member 6 (227 aa).

An N-terminal signal peptide occupies residues 1–25; that stretch reads MMEVLLRLLVTQVILLALATSFVSC. The cysteines at positions 35 and 51 are disulfide-linked. The Cupin type-1 domain occupies 65 to 216; it reads SGLNIARNTT…AFQLDVKLVR (152 aa). Asparagine 72 and asparagine 80 each carry an N-linked (GlcNAc...) asparagine glycan. 4 residues coordinate Mn(2+): histidine 113, histidine 115, glutamate 120, and histidine 162.

This sequence belongs to the germin family. Oligomer (believed to be a pentamer but probably hexamer).

The protein resides in the secreted. The protein localises to the extracellular space. It localises to the apoplast. May play a role in plant defense. Probably has no oxalate oxidase activity even if the active site is conserved. The chain is Germin-like protein subfamily 1 member 6 from Arabidopsis thaliana (Mouse-ear cress).